Consider the following 125-residue polypeptide: Phosphoribosyl-AMP cyclohydrolase (125 aa).

Asp-91 is a binding site for Mg(2+). Cys-92 provides a ligand contact to Zn(2+). The Mg(2+) site is built by Asp-93 and Asp-95. 2 residues coordinate Zn(2+): Cys-108 and Cys-115.

It belongs to the PRA-CH family. As to quaternary structure, homodimer. Requires Mg(2+) as cofactor. It depends on Zn(2+) as a cofactor.

Its subcellular location is the cytoplasm. It carries out the reaction 1-(5-phospho-beta-D-ribosyl)-5'-AMP + H2O = 1-(5-phospho-beta-D-ribosyl)-5-[(5-phospho-beta-D-ribosylamino)methylideneamino]imidazole-4-carboxamide. The protein operates within amino-acid biosynthesis; L-histidine biosynthesis; L-histidine from 5-phospho-alpha-D-ribose 1-diphosphate: step 3/9. Its function is as follows. Catalyzes the hydrolysis of the adenine ring of phosphoribosyl-AMP. The sequence is that of Phosphoribosyl-AMP cyclohydrolase from Streptomyces griseus subsp. griseus (strain JCM 4626 / CBS 651.72 / NBRC 13350 / KCC S-0626 / ISP 5235).